A 304-amino-acid chain; its full sequence is Uricase (304 aa).

The residue at position 2 (alanine 2) is an N-acetylalanine. 2 positions are modified to N6-acetyllysine; alternate: lysine 10 and lysine 23. An N6-succinyllysine; alternate mark is found at lysine 10 and lysine 23. The Charge relay system role is filled by lysine 23. Residues lysine 27 and lysine 36 each carry the N6-acetyllysine modification. 2 positions are modified to phosphoserine: serine 39 and serine 63. Catalysis depends on threonine 68, which acts as the Charge relay system. Threonine 68 and aspartate 69 together coordinate urate. 3 positions are modified to N6-acetyllysine: lysine 118, lysine 122, and lysine 164. Phenylalanine 170 provides a ligand contact to urate. Lysine 175 and lysine 185 each carry N6-acetyllysine. Residue arginine 187 coordinates urate. 2 positions are modified to N6-acetyllysine; alternate: lysine 221 and lysine 228. N6-succinyllysine; alternate is present on residues lysine 221 and lysine 228. At serine 232 the chain carries Phosphoserine. 3 residues coordinate urate: valine 235, glutamine 236, and asparagine 262. Histidine 264 (charge relay system) is an active-site residue. Lysine 278 carries the N6-acetyllysine modification. Tyrosine 289 carries the post-translational modification Phosphotyrosine. The short motif at serine 302 to leucine 304 is the Microbody targeting signal element.

This sequence belongs to the uricase family.

The protein localises to the peroxisome. The catalysed reaction is urate + O2 + H2O = 5-hydroxyisourate + H2O2. The protein operates within purine metabolism; urate degradation; (S)-allantoin from urate: step 1/3. Catalyzes the oxidation of uric acid to 5-hydroxyisourate, which is further processed to form (S)-allantoin. The protein is Uricase (UOX) of Macaca mulatta (Rhesus macaque).